The chain runs to 95 residues: Aspartyl/glutamyl-tRNA(Asn/Gln) amidotransferase subunit C (95 aa).

It belongs to the GatC family. Heterotrimer of A, B and C subunits.

It catalyses the reaction L-glutamyl-tRNA(Gln) + L-glutamine + ATP + H2O = L-glutaminyl-tRNA(Gln) + L-glutamate + ADP + phosphate + H(+). The enzyme catalyses L-aspartyl-tRNA(Asn) + L-glutamine + ATP + H2O = L-asparaginyl-tRNA(Asn) + L-glutamate + ADP + phosphate + 2 H(+). Functionally, allows the formation of correctly charged Asn-tRNA(Asn) or Gln-tRNA(Gln) through the transamidation of misacylated Asp-tRNA(Asn) or Glu-tRNA(Gln) in organisms which lack either or both of asparaginyl-tRNA or glutaminyl-tRNA synthetases. The reaction takes place in the presence of glutamine and ATP through an activated phospho-Asp-tRNA(Asn) or phospho-Glu-tRNA(Gln). This chain is Aspartyl/glutamyl-tRNA(Asn/Gln) amidotransferase subunit C, found in Caldanaerobacter subterraneus subsp. tengcongensis (strain DSM 15242 / JCM 11007 / NBRC 100824 / MB4) (Thermoanaerobacter tengcongensis).